The following is a 595-amino-acid chain: NAD-dependent protein deacetylase hst4 (595 aa).

Residues 1–106 (MAPRKTKPAT…HLDLTPRLGF (106 aa)) form a disordered region. A compositionally biased stretch (low complexity) spans 9 to 32 (ATKPAAKPTPASTATTSSCPSPKS). The Deacetylase sirtuin-type domain occupies 109 to 428 (YGDQEPQLNL…SADVERVKNE (320 aa)). NAD(+) is bound by residues 134–153 (GAGI…DGLF) and 222–225 (QNID). His253 functions as the Proton acceptor in the catalytic mechanism. Zn(2+)-binding residues include Cys261, Cys264, Cys283, and Cys286. NAD(+) is bound by residues 342–344 (GTS), 373–375 (NNE), and Cys394. The span at 445-473 (QAQTGMLTPSSSYDGDVENASTTTLSNPA) shows a compositional bias: polar residues. Positions 445 to 595 (QAQTGMLTPS…IPKGMGKLLD (151 aa)) are disordered. Composition is skewed to basic and acidic residues over residues 478 to 492 (KLTE…DAPK) and 530 to 543 (TPEE…EHKA).

The protein belongs to the sirtuin family. Class I subfamily. Zn(2+) serves as cofactor.

The protein resides in the nucleus. The enzyme catalyses N(6)-acetyl-L-lysyl-[protein] + NAD(+) + H2O = 2''-O-acetyl-ADP-D-ribose + nicotinamide + L-lysyl-[protein]. In terms of biological role, NAD-dependent histone deacetylase, which could function in telomeric silencing, cell cycle progression and chromosome stability. The polypeptide is NAD-dependent protein deacetylase hst4 (Emericella nidulans (strain FGSC A4 / ATCC 38163 / CBS 112.46 / NRRL 194 / M139) (Aspergillus nidulans)).